The sequence spans 189 residues: Interferon alpha-16 (189 aa).

The signal sequence occupies residues 1 to 23; the sequence is MALSFSLLMAVLVLSYKSICSLG. 2 disulfides stabilise this stretch: C24–C122 and C52–C162.

The protein belongs to the alpha/beta interferon family.

The protein localises to the secreted. Its function is as follows. Produced by macrophages, IFN-alpha have antiviral activities. Interferon stimulates the production of two enzymes: a protein kinase and an oligoadenylate synthetase. In Homo sapiens (Human), this protein is Interferon alpha-16 (IFNA16).